The chain runs to 331 residues: Beta-ketoacyl-[acyl-carrier-protein] synthase III (331 aa).

Residues C116 and H256 contribute to the active site. The segment at 257-261 (QANTR) is ACP-binding. Residue N286 is part of the active site.

The protein belongs to the thiolase-like superfamily. FabH family. Homodimer.

It is found in the cytoplasm. The enzyme catalyses malonyl-[ACP] + acetyl-CoA + H(+) = 3-oxobutanoyl-[ACP] + CO2 + CoA. It functions in the pathway lipid metabolism; fatty acid biosynthesis. In terms of biological role, catalyzes the condensation reaction of fatty acid synthesis by the addition to an acyl acceptor of two carbons from malonyl-ACP. Catalyzes the first condensation reaction which initiates fatty acid synthesis and may therefore play a role in governing the total rate of fatty acid production. Possesses both acetoacetyl-ACP synthase and acetyl transacylase activities. Its substrate specificity determines the biosynthesis of branched-chain and/or straight-chain of fatty acids. This chain is Beta-ketoacyl-[acyl-carrier-protein] synthase III, found in Caldanaerobacter subterraneus subsp. tengcongensis (strain DSM 15242 / JCM 11007 / NBRC 100824 / MB4) (Thermoanaerobacter tengcongensis).